Reading from the N-terminus, the 142-residue chain is Hemoglobin subunit alpha (142 aa).

Residues 2–142 (VLSPADKTNV…VSTVLTSKYR (141 aa)) form the Globin domain. The residue at position 4 (S4) is a Phosphoserine. The residue at position 8 (K8) is an N6-succinyllysine. T9 is subject to Phosphothreonine. N6-succinyllysine is present on K12. Residue K17 is modified to N6-acetyllysine; alternate. Residue K17 is modified to N6-succinyllysine; alternate. The residue at position 25 (Y25) is a Phosphotyrosine. S36 carries the phosphoserine modification. K41 is subject to N6-succinyllysine. A Phosphoserine modification is found at S50. H59 lines the O2 pocket. Residue H88 participates in heme b binding. S103 carries the phosphoserine modification. T109 carries the phosphothreonine modification. S125 and S132 each carry phosphoserine. 2 positions are modified to phosphothreonine: T135 and T138. At S139 the chain carries Phosphoserine.

Belongs to the globin family. In terms of assembly, heterotetramer of two alpha chains and two beta chains. Red blood cells.

In terms of biological role, involved in oxygen transport from the lung to the various peripheral tissues. Hemopressin acts as an antagonist peptide of the cannabinoid receptor CNR1. Hemopressin-binding efficiently blocks cannabinoid receptor CNR1 and subsequent signaling. The protein is Hemoglobin subunit alpha (HBA) of Sapajus apella (Brown-capped capuchin).